Here is a 106-residue protein sequence, read N- to C-terminus: Gibberellin-regulated protein 4 (106 aa).

Residues methionine 1–alanine 25 form the signal peptide.

Belongs to the GASA family. Post-translationally, six disulfide bonds may be present. As to expression, expressed in flower buds, style, stamen filaments, vasculature of petals, root phloem, vasculature of cotyledons and rosette leaves and developing embryo.

Its subcellular location is the secreted. Gibberellin-regulated protein involved in the regulation of floral meristem and floral organ identity, and promotion of seed size and weight. May play a role in the promotion of gibberellin responses such as regulation of flowering under short-day conditions, seed germination and inhibition of gibberellin oxidase. Possesses redox activity in E.coli and may function in redox regulation in planta. The chain is Gibberellin-regulated protein 4 (GASA4) from Arabidopsis thaliana (Mouse-ear cress).